Here is a 142-residue protein sequence, read N- to C-terminus: Large ribosomal subunit protein uL11 (142 aa).

This sequence belongs to the universal ribosomal protein uL11 family. Part of the ribosomal stalk of the 50S ribosomal subunit. Interacts with L10 and the large rRNA to form the base of the stalk. L10 forms an elongated spine to which L12 dimers bind in a sequential fashion forming a multimeric L10(L12)X complex. In terms of processing, one or more lysine residues are methylated.

In terms of biological role, forms part of the ribosomal stalk which helps the ribosome interact with GTP-bound translation factors. This Glaesserella parasuis serovar 5 (strain SH0165) (Haemophilus parasuis) protein is Large ribosomal subunit protein uL11.